We begin with the raw amino-acid sequence, 399 residues long: Probable peptidoglycan glycosyltransferase FtsW (399 aa).

A run of 9 helical transmembrane segments spans residues 33-53, 71-91, 98-118, 160-180, 182-202, 204-224, 287-307, 324-344, and 359-379; these read LVWLTLGLFSVGLIMVISTSI, IFYFFLIFLLSFIFLRTPIIF, IILIISIVLLVLVLLIGHSIH, FWGFFKPMSVIITQSMLLLAE, DLGTVVVLFFTTISVLFLSGA, IGQFFIIITVSILTIILLILL, IIGEELGYIGSFLILLIIFTI, IFSGFLACSIGIWLSFQTSIN, and LPFISYGGSSLIINSIAIFFL.

The protein belongs to the SEDS family. FtsW subfamily.

The protein localises to the cell inner membrane. The catalysed reaction is [GlcNAc-(1-&gt;4)-Mur2Ac(oyl-L-Ala-gamma-D-Glu-L-Lys-D-Ala-D-Ala)](n)-di-trans,octa-cis-undecaprenyl diphosphate + beta-D-GlcNAc-(1-&gt;4)-Mur2Ac(oyl-L-Ala-gamma-D-Glu-L-Lys-D-Ala-D-Ala)-di-trans,octa-cis-undecaprenyl diphosphate = [GlcNAc-(1-&gt;4)-Mur2Ac(oyl-L-Ala-gamma-D-Glu-L-Lys-D-Ala-D-Ala)](n+1)-di-trans,octa-cis-undecaprenyl diphosphate + di-trans,octa-cis-undecaprenyl diphosphate + H(+). It participates in cell wall biogenesis; peptidoglycan biosynthesis. Peptidoglycan polymerase that is essential for cell division. The protein is Probable peptidoglycan glycosyltransferase FtsW of Buchnera aphidicola subsp. Acyrthosiphon pisum (strain APS) (Acyrthosiphon pisum symbiotic bacterium).